The chain runs to 101 residues: uncharacterized protein (101 aa).

This is an uncharacterized protein from Saccharomyces cerevisiae (strain ATCC 204508 / S288c) (Baker's yeast).